The chain runs to 456 residues: uncharacterized protein (456 aa).

Basic and acidic residues-rich tracts occupy residues 181–210 (DQRK…DKKV) and 217–231 (KEIE…ENEE). The interval 181–231 (DQRKESIVNDERKKNPEFREKPDKNEDKKVKPPPSLKEIENKGIDHEENEE) is disordered. A coiled-coil region spans residues 216-248 (LKEIENKGIDHEENEEDKKRELMFKLQLLQKQY). Residues 347–365 (LALAILFNAVWFIAAKMIM) traverse the membrane as a helical segment. The segment covering 383 to 407 (NKSGTTPNSVSPRTWGNSKSPQSEF) has biased composition (polar residues). Residues 383–456 (NKSGTTPNSV…MREQGIETLK (74 aa)) are disordered. Positions 441–456 (DESRREMREQGIETLK) are enriched in basic and acidic residues.

The protein belongs to the IIV-6 067R family.

It is found in the membrane. This is an uncharacterized protein from Invertebrate iridescent virus 6 (IIV-6).